Reading from the N-terminus, the 348-residue chain is Outer membrane protein assembly factor BamC (348 aa).

A signal peptide spans 1–19; that stretch reads MKYSHQLVIGSLAVFVLTA. Residue C20 is the site of N-palmitoyl cysteine attachment. The S-diacylglycerol cysteine moiety is linked to residue C20.

It belongs to the BamC family. Part of the Bam complex.

The protein resides in the cell outer membrane. In terms of biological role, part of the outer membrane protein assembly complex, which is involved in assembly and insertion of beta-barrel proteins into the outer membrane. In Vibrio atlanticus (strain LGP32) (Vibrio splendidus (strain Mel32)), this protein is Outer membrane protein assembly factor BamC.